Here is a 281-residue protein sequence, read N- to C-terminus: Ribosomal protein L11 methyltransferase (281 aa).

Positions 131, 152, 174, and 217 each coordinate S-adenosyl-L-methionine.

Belongs to the methyltransferase superfamily. PrmA family.

It localises to the cytoplasm. It carries out the reaction L-lysyl-[protein] + 3 S-adenosyl-L-methionine = N(6),N(6),N(6)-trimethyl-L-lysyl-[protein] + 3 S-adenosyl-L-homocysteine + 3 H(+). Its function is as follows. Methylates ribosomal protein L11. The polypeptide is Ribosomal protein L11 methyltransferase (Phocaeicola vulgatus (strain ATCC 8482 / DSM 1447 / JCM 5826 / CCUG 4940 / NBRC 14291 / NCTC 11154) (Bacteroides vulgatus)).